The chain runs to 347 residues: 3-isopropylmalate dehydrogenase (347 aa).

The substrate site is built by Arg-94, Arg-104, Arg-128, and Asp-219. Residues Asp-219, Asp-243, and Asp-247 each contribute to the Mg(2+) site. An NAD(+)-binding site is contributed by 279 to 291 (GSAPDIAGQGKAD).

The protein belongs to the isocitrate and isopropylmalate dehydrogenases family. LeuB type 2 subfamily. As to quaternary structure, homodimer. It depends on Mg(2+) as a cofactor. The cofactor is Mn(2+).

The protein resides in the cytoplasm. It carries out the reaction (2R,3S)-3-isopropylmalate + NAD(+) = 4-methyl-2-oxopentanoate + CO2 + NADH. It functions in the pathway amino-acid biosynthesis; L-leucine biosynthesis; L-leucine from 3-methyl-2-oxobutanoate: step 3/4. In terms of biological role, catalyzes the oxidation of 3-carboxy-2-hydroxy-4-methylpentanoate (3-isopropylmalate) to 3-carboxy-4-methyl-2-oxopentanoate. The product decarboxylates to 4-methyl-2 oxopentanoate. The polypeptide is 3-isopropylmalate dehydrogenase (Streptomyces griseus subsp. griseus (strain JCM 4626 / CBS 651.72 / NBRC 13350 / KCC S-0626 / ISP 5235)).